The following is a 638-amino-acid chain: Protein NSP-INTERACTING KINASE 1 (638 aa).

An N-terminal signal peptide occupies residues 1–31; sequence MESTIVMMMMITRSFFCFLGFLCLLCSSVHG. Over 32–248 the chain is Extracellular; sequence LLSPKGVNFE…AGGSRNHKMA (217 aa). Asn92 and Asn103 each carry an N-linked (GlcNAc...) asparagine glycan. 4 LRR repeats span residues 104–128, 130–152, 153–175, and 177–200; these read LTNLRIVLLQNNNIKGKIPAEIGRL, RLETLDLSDNFFHGEIPFSVGYL, QSLQYLRLNNNSLSGVFPLSLSN, and TQLAFLDLSYNNLSGPVPRFAAKT. N-linked (GlcNAc...) asparagine glycans are attached at residues Asn162, Asn175, Asn188, Asn219, and Asn231. The chain crosses the membrane as a helical span at residues 249–269; it reads IAVGSSVGTVSLIFIAVGLFL. The Cytoplasmic portion of the chain corresponds to 270–638; sequence WWRQRHNQNT…VQAMELSGPR (369 aa). Thr309 is subject to Phosphothreonine. The Protein kinase domain maps to 312-593; sequence FSSKNLLGKG…EGDGLAEKWE (282 aa). 318–326 lines the ATP pocket; the sequence is LGKGGYGNV. Thr335 carries the post-translational modification Phosphothreonine. Lys340 contacts ATP. 2 positions are modified to phosphoserine: Ser393 and Ser396. The tract at residues 422–502 is interaction with geminivirus NSP protein; that stretch reads YLHEQCDPKI…DVFGFGILLL (81 aa). The Proton acceptor role is filled by Asp435. Phosphothreonine occurs at positions 468, 469, and 474. Position 482 is a phosphotyrosine (Tyr482). Position 484 is a phosphoserine (Ser484). Thr485 is modified (phosphothreonine). Ser489 is modified (phosphoserine). Position 566 is a phosphothreonine (Thr566).

This sequence belongs to the protein kinase superfamily. Ser/Thr protein kinase family. In terms of assembly, oligomer. Interacts with geminivirus nuclear shuttle protein (NSP). Interacts with RPL10A and RPL18B. In terms of processing, autophosphorylated. As to expression, expressed in seedlings, leaves, roots, stems and flowers.

It localises to the cell membrane. It carries out the reaction L-seryl-[protein] + ATP = O-phospho-L-seryl-[protein] + ADP + H(+). The catalysed reaction is L-threonyl-[protein] + ATP = O-phospho-L-threonyl-[protein] + ADP + H(+). Its activity is regulated as follows. Inhibited by the viral nuclear shuttle protein (NSP) that binds to the region required for oligomerization. Functionally, involved in defense response to geminivirus and begomovirus infection via regulation of the nuclear trafficking of RPL10A. Phosphorylates RPL10A in vitro. Activation of NIK1 down-regulates cytosolic translation. In Arabidopsis thaliana (Mouse-ear cress), this protein is Protein NSP-INTERACTING KINASE 1.